Reading from the N-terminus, the 405-residue chain is Peroxisomal membrane protein PEX13 (405 aa).

Pro residues predominate over residues 1 to 11 (MASQPPPPPKP). Positions 1 to 71 (MASQPPPPPK…SQQTGSNNVN (71 aa)) are disordered. The Peroxisomal matrix portion of the chain corresponds to 1–136 (MASQPPPPPK…SSRGAFQSIE (136 aa)). Residues 61-71 (PSQQTGSNNVN) show a composition bias toward polar residues. The helical transmembrane segment at 137-157 (SIVHAFASVSMMMDATFSAVY) threads the bilayer. The tract at residues 147–235 (MMMDATFSAV…EDQATNSAKS (89 aa)) is targeting to peroxisomes. The Cytoplasmic segment spans residues 158-176 (NSFRAVLDVANHFSRLKIH). Residues 177 to 194 (FTKVFSAFALVRTIRYLY) traverse the membrane as a helical segment. An interaction with PEX19 region spans residues 177-198 (FTKVFSAFALVRTIRYLYRRLQ). Residues 195–235 (RRLQWMMGLRRGSENEDLWAESEGTVACLSAEDQATNSAKS) are Peroxisomal matrix-facing. The helical transmembrane segment at 236–256 (WPIFLFFAVILGGPYLIWKLL) threads the bilayer. Topologically, residues 257 to 405 (STHNDEVTDN…TGKNGDKQDL (149 aa)) are cytoplasmic. Residues 274–338 (DDHVVARAEY…PANYVKILGK (65 aa)) form the SH3 domain. Phosphoserine is present on Ser356.

The protein belongs to the peroxin-13 family. Interacts (via SH3 domain) with PEX14 (via SH3-binding motif); forming the PEX13-PEX14 docking complex. Interacts with PEX19.

Its subcellular location is the peroxisome membrane. Its function is as follows. Component of the PEX13-PEX14 docking complex, a translocon channel that specifically mediates the import of peroxisomal cargo proteins bound to PEX5 receptor. The PEX13-PEX14 docking complex forms a large import pore which can be opened to a diameter of about 9 nm. Mechanistically, PEX5 receptor along with cargo proteins associates with the PEX14 subunit of the PEX13-PEX14 docking complex in the cytosol, leading to the insertion of the receptor into the organelle membrane with the concomitant translocation of the cargo into the peroxisome matrix. Involved in the import of PTS1- and PTS2-type containing proteins. The polypeptide is Peroxisomal membrane protein PEX13 (Mus musculus (Mouse)).